We begin with the raw amino-acid sequence, 103 residues long: UPF0145 protein BCE_1095 (103 aa).

This sequence belongs to the UPF0145 family.

In Bacillus cereus (strain ATCC 10987 / NRS 248), this protein is UPF0145 protein BCE_1095.